The sequence spans 207 residues: Peptidyl-tRNA hydrolase (207 aa).

Residue tyrosine 14 coordinates tRNA. Histidine 19 acts as the Proton acceptor in catalysis. Positions 64, 66, and 112 each coordinate tRNA.

Belongs to the PTH family. Monomer.

It localises to the cytoplasm. The catalysed reaction is an N-acyl-L-alpha-aminoacyl-tRNA + H2O = an N-acyl-L-amino acid + a tRNA + H(+). Functionally, hydrolyzes ribosome-free peptidyl-tRNAs (with 1 or more amino acids incorporated), which drop off the ribosome during protein synthesis, or as a result of ribosome stalling. Catalyzes the release of premature peptidyl moieties from peptidyl-tRNA molecules trapped in stalled 50S ribosomal subunits, and thus maintains levels of free tRNAs and 50S ribosomes. The chain is Peptidyl-tRNA hydrolase from Rhodopseudomonas palustris (strain BisB5).